The sequence spans 318 residues: Malonyl CoA-acyl carrier protein transacylase, mitochondrial (318 aa).

Belongs to the FabD family.

The protein resides in the mitochondrion. It carries out the reaction holo-[ACP] + malonyl-CoA = malonyl-[ACP] + CoA. Its pathway is lipid metabolism; fatty acid biosynthesis. Involved in biosynthesis of fatty acids in mitochondria. In Schizosaccharomyces pombe (strain 972 / ATCC 24843) (Fission yeast), this protein is Malonyl CoA-acyl carrier protein transacylase, mitochondrial (mct1).